The chain runs to 80 residues: MSRKTTVRHFEENLSELDTLVTQLESNQLSLEEALKAFEKGVKLSQECQSVLTQAEQKVQILLEKQDGEHLETFDPELNS.

The protein belongs to the XseB family. As to quaternary structure, heterooligomer composed of large and small subunits.

It localises to the cytoplasm. It catalyses the reaction Exonucleolytic cleavage in either 5'- to 3'- or 3'- to 5'-direction to yield nucleoside 5'-phosphates.. Bidirectionally degrades single-stranded DNA into large acid-insoluble oligonucleotides, which are then degraded further into small acid-soluble oligonucleotides. This Marinomonas sp. (strain MWYL1) protein is Exodeoxyribonuclease 7 small subunit.